A 274-amino-acid chain; its full sequence is Copper chaperone for superoxide dismutase (274 aa).

The HMA domain occupies 11–74 (ACMLEFAVQM…LLEDTGRQAV (64 aa)). Cu cation is bound by residues cysteine 22 and cysteine 25. A Glycyl lysine isopeptide (Lys-Gly) (interchain with G-Cter in ubiquitin) cross-link involves residue lysine 76. Residues 88–234 (AAVAILGGSG…LACGIIARSA (147 aa)) form a superoxide dismutase-like region. The cysteines at positions 141 and 227 are disulfide-linked. Residues histidine 147, histidine 155, histidine 164, and aspartate 167 each coordinate Zn(2+). Residues lysine 189, lysine 216, and lysine 241 each participate in a glycyl lysine isopeptide (Lys-Gly) (interchain with G-Cter in ubiquitin) cross-link. Cu cation contacts are provided by cysteine 244 and cysteine 246.

In the C-terminal section; belongs to the Cu-Zn superoxide dismutase family. Homodimer, and heterodimer with SOD1. Interacts with COMMD1. Interacts with XIAP/BIRC4. Interacts with SLC31A1(via C-terminal domain); this interaction is Cu(1+)-mediated. The heterodimer CCS:SOD1 interacts with SLC31A1; this heterotrimer is Cu(1+)-mediated and its maintenance is regulated through SOD1 activation. The cofactor is Cu(2+). Requires Zn(2+) as cofactor. In terms of processing, ubiquitinion by XIAP/BIRC4 leads to enhancement of its chaperone activity toward its physiologic target, SOD1, rather than proteasomal degradation. XIAP/BIRC4 preferentially ubiquitinates at Lys-241.

It is found in the cytoplasm. Functionally, delivers copper to copper zinc superoxide dismutase (SOD1). The sequence is that of Copper chaperone for superoxide dismutase from Sus scrofa (Pig).